The primary structure comprises 213 residues: MRSKYIVIEGLEGAGKTTARNVVVETLEQLGIRDMVFTREPGGTQLAEKLRSLVLDIKSVGDEVITDKAEVLMFYAARVQLVETVIKPALANGTWVIGDRHDLSTQAYQGGGRGIDQHMLATLRDAVLGDFRPDLTLYLDVTPEVGLKRARARGELDRIEQESFDFFNRTRARYLELAAQDKSIHTIDATQPLEAVMGAIRTTVTNWVKELDA.

10–17 serves as a coordination point for ATP; that stretch reads GLEGAGKT.

Belongs to the thymidylate kinase family.

The enzyme catalyses dTMP + ATP = dTDP + ADP. Its function is as follows. Phosphorylation of dTMP to form dTDP in both de novo and salvage pathways of dTTP synthesis. The protein is Thymidylate kinase of Escherichia coli O81 (strain ED1a).